A 2833-amino-acid chain; its full sequence is Reticulocyte-binding protein 1 (2833 aa).

The first 22 residues, 1 to 22, serve as a signal peptide directing secretion; the sequence is MKRGICLAALLCLFNYLGAGHG. The segment covering 75-91 has biased composition (basic and acidic residues); that stretch reads ETDNASGKDAEGSRPSH. Disordered regions lie at residues 75–95, 112–133, and 819–860; these read ETDN…DSSF, HVKE…KENE, and KHKQ…NFSR. The span at 819–836 shows a compositional bias: basic and acidic residues; it reads KHKQNRSEKEEEYFKNES. Residues 837 to 849 are compositionally biased toward acidic residues; sequence VEEDLSREETEEQ. The Cell attachment site signature appears at 2563-2565; it reads RGD. A disordered region spans residues 2619–2755; that stretch reads EMNSKKSAIE…GTYQDTSNSS (137 aa). 2 stretches are compositionally biased toward basic and acidic residues: residues 2621–2633 and 2640–2652; these read NSKK…EKTA and ENNR…RARV. The segment covering 2655 to 2670 has biased composition (polar residues); the sequence is MSMNNDPTQSETTHSE. Positions 2706 to 2720 are enriched in acidic residues; it reads LEEEETTAPMEETEM. Over residues 2731–2742 the composition is skewed to basic and acidic residues; that stretch reads TRSDEPDMHTEN. A compositionally biased stretch (polar residues) spans 2743 to 2755; the sequence is TQDGTYQDTSNSS.

As to quaternary structure, homodimer.

The protein localises to the membrane. In terms of biological role, involved in reticulocyte adhesion. Specifically binds to human reticulocyte cells. The sequence is that of Reticulocyte-binding protein 1 (RBP1) from Plasmodium vivax (strain Belem).